We begin with the raw amino-acid sequence, 493 residues long: (+)-menthofuran synthase (493 aa).

A topological domain (cytoplasmic) is located at residue Met-1. The chain crosses the membrane as a helical; Signal-anchor for type II membrane protein span at residues 2-19 (AALLVFFSVSLILLAVLF). The Lumenal portion of the chain corresponds to 20-493 (HKRKSSLSSR…LLVLATPRQS (474 aa)). N-linked (GlcNAc...) asparagine glycosylation is present at Asn-169. Position 434 (Cys-434) interacts with heme.

It belongs to the cytochrome P450 family. It depends on heme as a cofactor.

The protein resides in the membrane. It carries out the reaction (R)-pulegone + reduced [NADPH--hemoprotein reductase] + O2 = (R)-menthofuran + oxidized [NADPH--hemoprotein reductase] + 2 H2O + H(+). It participates in secondary metabolite biosynthesis; terpenoid biosynthesis. In terms of biological role, monoterpene synthase that catalyzes the formation of (+)-menthofuran from (+)-pulegone. This chain is (+)-menthofuran synthase, found in Mentha piperita (Peppermint).